The following is a 532-amino-acid chain: 2,3-bisphosphoglycerate-independent phosphoglycerate mutase (532 aa).

Mn(2+) contacts are provided by aspartate 15 and serine 65. Catalysis depends on serine 65, which acts as the Phosphoserine intermediate. Residues histidine 126, 156–157, arginine 188, arginine 194, 258–261, and lysine 331 contribute to the substrate site; these read RD and RPDR. Residues aspartate 398, histidine 402, aspartate 439, histidine 440, and histidine 457 each coordinate Mn(2+).

It belongs to the BPG-independent phosphoglycerate mutase family. As to quaternary structure, monomer. The cofactor is Mn(2+).

It carries out the reaction (2R)-2-phosphoglycerate = (2R)-3-phosphoglycerate. It participates in carbohydrate degradation; glycolysis; pyruvate from D-glyceraldehyde 3-phosphate: step 3/5. In terms of biological role, catalyzes the interconversion of 2-phosphoglycerate and 3-phosphoglycerate. This chain is 2,3-bisphosphoglycerate-independent phosphoglycerate mutase, found in Synechocystis sp. (strain ATCC 27184 / PCC 6803 / Kazusa).